Here is a 745-residue protein sequence, read N- to C-terminus: Centromere protein I (745 aa).

Over residues M1–L27 the composition is skewed to polar residues. The tract at residues M1–Q58 is disordered. Residues S39–E50 show a composition bias toward low complexity.

This sequence belongs to the CENP-I/CTF3 family. As to quaternary structure, component of the CENPA-CAD complex, composed of CENPI, CENPK, CENPL, CENPO, CENPP, CENPQ, CENPR and CENPS. The CENPA-CAD complex interacts with the CENPA-NAC complex, at least composed of CENPA, CENPC, CENPH, CENPM, CENPN, CENPT and CENPU. Interacts with SENP6. Post-translationally, sumoylated. Sumoylated form can be polyubiquitinated by RNF4, leading to its degradation. Desumoylation by SENP6 prevents its degradation. In terms of tissue distribution, highly expressed in testis, ovary and spleen. A much lower mRNA level is found in brain and lung, and no expression is detected in liver, kidney, heart, muscle, pituitary gland, prostate, epididymis and seminal vesicle.

The protein localises to the nucleus. It is found in the chromosome. It localises to the centromere. In terms of biological role, component of the CENPA-CAD (nucleosome distal) complex, a complex recruited to centromeres which is involved in assembly of kinetochore proteins, mitotic progression and chromosome segregation. May be involved in incorporation of newly synthesized CENPA into centromeres via its interaction with the CENPA-NAC complex. Required for the localization of CENPF, MAD1L1 and MAD2 (MAD2L1 or MAD2L2) to kinetochores. Involved in the response of gonadal tissues to follicle-stimulating hormone. The chain is Centromere protein I (Cenpi) from Rattus norvegicus (Rat).